A 436-amino-acid polypeptide reads, in one-letter code: D-aminoacyl-tRNA deacylase (436 aa).

The protein belongs to the DtdA deacylase family. Monomer. It depends on Zn(2+) as a cofactor.

The catalysed reaction is a D-aminoacyl-tRNA + H2O = a tRNA + a D-alpha-amino acid + H(+). It catalyses the reaction glycyl-tRNA(Ala) + H2O = tRNA(Ala) + glycine + H(+). D-aminoacyl-tRNA deacylase with broad substrate specificity. By recycling D-aminoacyl-tRNA to D-amino acids and free tRNA molecules, this enzyme counteracts the toxicity associated with the formation of D-aminoacyl-tRNA entities in vivo. This is D-aminoacyl-tRNA deacylase from Methanoregula boonei (strain DSM 21154 / JCM 14090 / 6A8).